Consider the following 386-residue polypeptide: D-amino-acid oxidase (386 aa).

FAD contacts are provided by Gly-14, Gly-15, Val-16, Val-17, Glu-39, Arg-40, Ala-51, Gly-52, and Gly-53. The disordered stretch occupies residues 109–138 (SSSPPHPLLPPWVDPSASAAPPRELGTPDT). Residues 112-121 (PPHPLLPPWV) are compositionally biased toward pro residues. Residues Arg-174, Val-175, and Ala-176 each coordinate FAD. Residues Tyr-253, Tyr-261, and Lys-332 each contribute to the D-serine site. The D-proline site is built by Tyr-261 and Lys-332. The FAD site is built by Lys-332, Gly-344, Ile-345, Gly-362, and Ala-364. Lys-332 is a binding site for D-dopa. Gly-362 contacts D-serine. Position 362 (Gly-362) interacts with D-proline. Gly-362 contributes to the D-dopa binding site.

This sequence belongs to the DAMOX/DASOX family.

The catalysed reaction is a D-alpha-amino acid + O2 + H2O = a 2-oxocarboxylate + H2O2 + NH4(+). It carries out the reaction D-alanine + O2 + H2O = pyruvate + H2O2 + NH4(+). It catalyses the reaction D-aspartate + O2 + H2O = oxaloacetate + H2O2 + NH4(+). Its function is as follows. Catalyzes the oxidative deamination of D-amino acids with broad substrate specificity. Enables the organism to utilize D-amino acids as a source of nutrients. The polypeptide is D-amino-acid oxidase (Zea mays (Maize)).